The sequence spans 677 residues: UvrABC system protein B (677 aa).

Residues 31-417 (DRIESGETDI…SDGVVEQIIR (387 aa)) form the Helicase ATP-binding domain. 44 to 51 (GATGTGKS) serves as a coordination point for ATP. A Beta-hairpin motif is present at residues 97–120 (YYDYYQPEAYVPKTDTFIEKDASV). The Helicase C-terminal domain occupies 434–596 (QIDDLLEEIR…VTPVPIKKTV (163 aa)). The region spanning 629–664 (KSHIKSLEAKMYMAAESLMFEEAAELRDEIQSLKEK) is the UVR domain.

It belongs to the UvrB family. In terms of assembly, forms a heterotetramer with UvrA during the search for lesions. Interacts with UvrC in an incision complex.

It is found in the cytoplasm. In terms of biological role, the UvrABC repair system catalyzes the recognition and processing of DNA lesions. A damage recognition complex composed of 2 UvrA and 2 UvrB subunits scans DNA for abnormalities. Upon binding of the UvrA(2)B(2) complex to a putative damaged site, the DNA wraps around one UvrB monomer. DNA wrap is dependent on ATP binding by UvrB and probably causes local melting of the DNA helix, facilitating insertion of UvrB beta-hairpin between the DNA strands. Then UvrB probes one DNA strand for the presence of a lesion. If a lesion is found the UvrA subunits dissociate and the UvrB-DNA preincision complex is formed. This complex is subsequently bound by UvrC and the second UvrB is released. If no lesion is found, the DNA wraps around the other UvrB subunit that will check the other stand for damage. In Tropheryma whipplei (strain TW08/27) (Whipple's bacillus), this protein is UvrABC system protein B.